A 190-amino-acid polypeptide reads, in one-letter code: Elongation factor P (190 aa).

The protein belongs to the elongation factor P family.

The protein resides in the cytoplasm. It functions in the pathway protein biosynthesis; polypeptide chain elongation. Involved in peptide bond synthesis. Stimulates efficient translation and peptide-bond synthesis on native or reconstituted 70S ribosomes in vitro. Probably functions indirectly by altering the affinity of the ribosome for aminoacyl-tRNA, thus increasing their reactivity as acceptors for peptidyl transferase. This chain is Elongation factor P (efp), found in Mycoplasma genitalium (strain ATCC 33530 / DSM 19775 / NCTC 10195 / G37) (Mycoplasmoides genitalium).